The sequence spans 166 residues: Small ribosomal subunit protein uS5 (166 aa).

One can recognise an S5 DRBM domain in the interval 11 to 74 (LQEKLIAVNR…EKARRNMMNV (64 aa)).

Belongs to the universal ribosomal protein uS5 family. As to quaternary structure, part of the 30S ribosomal subunit. Contacts proteins S4 and S8.

With S4 and S12 plays an important role in translational accuracy. Functionally, located at the back of the 30S subunit body where it stabilizes the conformation of the head with respect to the body. In Buchnera aphidicola subsp. Acyrthosiphon kondoi (Acyrthosiphon kondoi symbiotic bacterium), this protein is Small ribosomal subunit protein uS5.